A 115-amino-acid chain; its full sequence is Galanin-like peptide (115 aa).

An N-terminal signal peptide occupies residues M1–S23. A propeptide spanning residues N86 to S115 is cleaved from the precursor.

Belongs to the galanin family. In terms of tissue distribution, hypothalamus and pituitary gland.

The protein localises to the secreted. In terms of biological role, hypothalamic neuropeptide which binds to the G-protein-coupled galanin receptors (GALR1, GALR2 and GALR3). Involved in a large number of putative physiological functions in CNS homeostatic processes, including the regulation of gonadotropin-releasing hormone secretion. Exhibits potent and dose-dependent vasoconstrictor and anti-edema activity in the cutaneous microvasculature, a physiologic effects which does not appear to be mediated via GALR1 or GALR2. Exhibits antimicrobial activity against Gram-negative bacterias, inducing bacterial membrane blebbing. In Macaca nemestrina (Pig-tailed macaque), this protein is Galanin-like peptide (GALP).